We begin with the raw amino-acid sequence, 236 residues long: Phosphoribosylaminoimidazole-succinocarboxamide synthase (236 aa).

Belongs to the SAICAR synthetase family.

It carries out the reaction 5-amino-1-(5-phospho-D-ribosyl)imidazole-4-carboxylate + L-aspartate + ATP = (2S)-2-[5-amino-1-(5-phospho-beta-D-ribosyl)imidazole-4-carboxamido]succinate + ADP + phosphate + 2 H(+). Its pathway is purine metabolism; IMP biosynthesis via de novo pathway; 5-amino-1-(5-phospho-D-ribosyl)imidazole-4-carboxamide from 5-amino-1-(5-phospho-D-ribosyl)imidazole-4-carboxylate: step 1/2. The protein is Phosphoribosylaminoimidazole-succinocarboxamide synthase of Rickettsia akari (strain Hartford).